Consider the following 441-residue polypeptide: Protein arginine methyltransferase NDUFAF7, mitochondrial (441 aa).

The transit peptide at 1–46 directs the protein to the mitochondrion; the sequence is MSVLLRSGLGPLCAVARAAIPFIWRGKYFSSGNEPAENPVTPMLRH.

It belongs to the NDUFAF7 family. In terms of assembly, interacts with NDUFS2.

The protein resides in the mitochondrion. The enzyme catalyses L-arginyl-[protein] + 2 S-adenosyl-L-methionine = N(omega),N(omega)'-dimethyl-L-arginyl-[protein] + 2 S-adenosyl-L-homocysteine + 2 H(+). Functionally, arginine methyltransferase involved in the assembly or stability of mitochondrial NADH:ubiquinone oxidoreductase complex (complex I). Acts by mediating symmetric dimethylation of 'Arg-118' of NDUFS2 after it assembles into the complex I, stabilizing the early intermediate complex. The chain is Protein arginine methyltransferase NDUFAF7, mitochondrial from Homo sapiens (Human).